The primary structure comprises 480 residues: MNFETVIGLEVHVELNTNSKIFSPTSAHFGNDQNANTNVIDWSFPGVLPVLNKGVVDAGIKAALALNMDIHKKMHFDRKNYFYPDNPKAYQISQFDEPIGYNGWIEVELEDGTTKKIGIERAHLEEDAGKNTHGTDGYSYVDLNRQGVPLIEIVSEADMRSPEEAYAYLTALKEVIQYAGISDVKMEEGSMRVDANISLRPYGQEKFGTKTELKNLNSFSNVRKGLEYEVQRQAEILRSGGQIRQETRRYDEANKATILMRVKEGAADYRYFPEPDLPLFEISDEWIEEMRTELPEFPKERRARYVSDLGLSDYDASQLTANKVTSDFFEKAVALGGDAKQVSNWLQGEVAQFLNAEGKTLEQIELTPENLVEMIAIIEDGTISSKIAKKVFVHLAKNGGGAREYVEKAGMVQISDPAILIPIIHQVFADNEAAVADFKSGKRNADKAFTGFLMKATKGQANPQVALKLLAQELAKLKEN.

This sequence belongs to the GatB/GatE family. GatB subfamily. In terms of assembly, heterotrimer of A, B and C subunits.

It catalyses the reaction L-glutamyl-tRNA(Gln) + L-glutamine + ATP + H2O = L-glutaminyl-tRNA(Gln) + L-glutamate + ADP + phosphate + H(+). The catalysed reaction is L-aspartyl-tRNA(Asn) + L-glutamine + ATP + H2O = L-asparaginyl-tRNA(Asn) + L-glutamate + ADP + phosphate + 2 H(+). Its function is as follows. Allows the formation of correctly charged Asn-tRNA(Asn) or Gln-tRNA(Gln) through the transamidation of misacylated Asp-tRNA(Asn) or Glu-tRNA(Gln) in organisms which lack either or both of asparaginyl-tRNA or glutaminyl-tRNA synthetases. The reaction takes place in the presence of glutamine and ATP through an activated phospho-Asp-tRNA(Asn) or phospho-Glu-tRNA(Gln). The chain is Aspartyl/glutamyl-tRNA(Asn/Gln) amidotransferase subunit B from Streptococcus pneumoniae serotype 2 (strain D39 / NCTC 7466).